The sequence spans 509 residues: Proton-gated ion channel subunit pbo-5 (509 aa).

A signal peptide spans 1–21 (MTRLSILQHLLTFLILSKINA). Residues 22 to 275 (TSTTESYFDS…ISLKRRPLFY (254 aa)) lie on the Extracellular side of the membrane. The cysteines at positions 193 and 207 are disulfide-linked. 3 helical membrane passes run 276 to 296 (MVTLTFPSYIMCAISVVGLFA), 310 to 330 (LGVTAILTMAVLSLVVSEKVP), and 336 to 356 (VPLLVAYFLFNMVIVSIAAMT). The Cytoplasmic segment spans residues 357-487 (TGIVMKVHRL…GYVRISERLD (131 aa)). Residues 488-508 (ILFMFLFLSTVTIPVAVLFYL) traverse the membrane as a helical segment.

It belongs to the ligand-gated ion channel (TC 1.A.9) family. Acetylcholine receptor (TC 1.A.9.1) subfamily. The functional channel is a heterooligomer of pbo-5 and pbo-6. May self-associate to form homooligomers with negligible ion channel activity. In terms of tissue distribution, expressed in the posterior body muscles. Also detected in the RIFL, RIFR and RIS head neurons.

Its subcellular location is the membrane. Its function is as follows. Forms a proton-gated ion channel with pbo-6 that is activated by acidification of the posterior coelomic space, leading to posterior body wall muscle contraction (pBoc) during the defecation cycle. Probably by regulating the defecation motor program, required for fatty acid uptake by intestinal cells. Does not bind neurotransmitters such as acetylcholine, gamma-aminobutyric acid, glycine, serotonin, glutamate or choline. This chain is Proton-gated ion channel subunit pbo-5, found in Caenorhabditis elegans.